A 314-amino-acid chain; its full sequence is Olfactory receptor 5B3 (314 aa).

The Extracellular segment spans residues 1-23 (MENKTEVTQFILLGLTNDSELQV). Residues Asn-3 and Asn-17 are each glycosylated (N-linked (GlcNAc...) asparagine). A helical transmembrane segment spans residues 24–44 (PLFITFPFIYIITLVGNLGII). Residues 45 to 52 (VLIFWDSC) are Cytoplasmic-facing. Residues 53-73 (LHNPMYFFLSNLSLVDFCYSS) form a helical membrane-spanning segment. Topologically, residues 74 to 97 (AVTPIVMAGFLIEDKVISYNACAA) are extracellular. A disulfide bridge connects residues Cys-95 and Cys-187. Residues 98 to 118 (QMYIFVAFATVENYLLASMAY) traverse the membrane as a helical segment. Topologically, residues 119–131 (DRYAAVCKPLHYT) are cytoplasmic. The helical transmembrane segment at 132-152 (TTMTTTVCARLAIGSYLCGFL) threads the bilayer. The N-linked (GlcNAc...) asparagine glycan is linked to Asn-153. Over 153–194 (NASIHTGDTFSLSFCKSNEVHHFFCDIPAVMVLSCSDRHISE) the chain is Extracellular. The helical transmembrane segment at 195-215 (LVLIYVVSFNIFIALLVILIS) threads the bilayer. Residues 216 to 235 (YTFIFITILKMHSASVYQKP) are Cytoplasmic-facing. Residues 236-256 (LSTCASHFIAVGIFYGTIIFM) traverse the membrane as a helical segment. The Extracellular portion of the chain corresponds to 257–269 (YLQPSSSHSMDTD). A helical transmembrane segment spans residues 270-290 (KMAPVFYTMVIPMLNPLVYSL). At 291–314 (RNKEVKSAFKKVVEKAKLSVGWSV) the chain is on the cytoplasmic side.

This sequence belongs to the G-protein coupled receptor 1 family.

Its subcellular location is the cell membrane. Its function is as follows. Odorant receptor. The chain is Olfactory receptor 5B3 (OR5B3) from Homo sapiens (Human).